The chain runs to 272 residues: WIMGHMVNDLEMVDYYVDKGANGLEIDITFNSNGIAEYTYHGVPCDCFRNCRRNTTLSTYLNYVRQLTTPGDQKFRQNLIFIIMDLKLNRLKSQALFNAGLSIADRLTQYYWKDDGKARAYFLLSVPYVRQAAFIRGFQSRFEEKGLKKYYEKIGWDFSANEDLNRIREAYQKLNISGHIWQSDGITNCLTRRTRRLKEAIRKRDSPGWYINKVYSWSLDRYKSIKYALDLGVDGVMSNYADRLVKILSKGTYKRRFRLATHEDNPWETFTP.

His5 is a catalytic residue. Mg(2+) contacts are provided by Glu25 and Asp27. The active-site Nucleophile is the His41. Intrachain disulfides connect Cys45-Cys51 and Cys47-Cys189. A Mg(2+)-binding site is contributed by Asp85.

This sequence belongs to the arthropod phospholipase D family. Class II subfamily. Mg(2+) serves as cofactor. Expressed by the venom gland.

Its subcellular location is the secreted. It catalyses the reaction an N-(acyl)-sphingosylphosphocholine = an N-(acyl)-sphingosyl-1,3-cyclic phosphate + choline. The enzyme catalyses an N-(acyl)-sphingosylphosphoethanolamine = an N-(acyl)-sphingosyl-1,3-cyclic phosphate + ethanolamine. It carries out the reaction a 1-acyl-sn-glycero-3-phosphocholine = a 1-acyl-sn-glycero-2,3-cyclic phosphate + choline. The catalysed reaction is a 1-acyl-sn-glycero-3-phosphoethanolamine = a 1-acyl-sn-glycero-2,3-cyclic phosphate + ethanolamine. Functionally, dermonecrotic toxins cleave the phosphodiester linkage between the phosphate and headgroup of certain phospholipids (sphingolipid and lysolipid substrates), forming an alcohol (often choline) and a cyclic phosphate. This toxin acts on sphingomyelin (SM). It may also act on ceramide phosphoethanolamine (CPE), lysophosphatidylcholine (LPC) and lysophosphatidylethanolamine (LPE), but not on lysophosphatidylserine (LPS), and lysophosphatidylglycerol (LPG). It acts by transphosphatidylation, releasing exclusively cyclic phosphate products as second products. Induces dermonecrosis, hemolysis, increased vascular permeability, edema, inflammatory response, and platelet aggregation. The chain is Dermonecrotic toxin StSicTox-betaIF1 from Sicarius terrosus (Cave spider).